Consider the following 122-residue polypeptide: uncharacterized protein (122 aa).

Positions 10-120 (VFARILRGEI…AGRRLGPMIT (111 aa)) constitute an HIT domain. The Histidine triad motif motif lies at 104–108 (HLHIH).

This is an uncharacterized protein from Azospirillum brasilense.